Here is a 301-residue protein sequence, read N- to C-terminus: MLNSSRKYACRSLFRQANVSIKGLFYNGGAYRRGFSTGCCLRSDNKESPSARQPLDRLQLGDEINEPEPIRTRFFQFSRWKATIALLLLSGGTYAYLSRKRRLLETEKEADANRAYGSVALGGPFNLTDFNGKPFTEENLKGKFSILYFGFSHCPDICPEELDRLTYWISELDDKDHIKIQPLFISCDPARDTPDVLKEYLSDFHPAIIGLTGTYDQVKSVCKKYKVYFSTPRDVKPNQDYLVDHSIFFYLIDPEGQFIDALGRNYDEQSGLEKIREQIQAYVPKEERERRSKKWYSFIFN.

The chain crosses the membrane as a helical span at residues 82-98 (ATIALLLLSGGTYAYLS). Residues 101–284 (RRLLETEKEA…IREQIQAYVP (184 aa)) enclose the Thioredoxin domain. Residues Cys154, Cys158, and His245 each coordinate Cu cation.

This sequence belongs to the SCO1/2 family.

It is found in the mitochondrion inner membrane. Its function is as follows. Acts as a copper chaperone, transporting copper to the Cu(A) site on the cytochrome c oxidase subunit II (COX2). This is Protein SCO2, mitochondrial (SCO2) from Saccharomyces cerevisiae (strain ATCC 204508 / S288c) (Baker's yeast).